Here is a 209-residue protein sequence, read N- to C-terminus: Protease (209 aa).

Residues histidine 55, aspartate 72, and cysteine 123 contribute to the active site.

Belongs to the peptidase C5 family. As to quaternary structure, interacts with protease cofactor pVI-C; this interaction is necessary for protease activation.

Its subcellular location is the virion. The protein localises to the host nucleus. The enzyme catalyses Cleaves proteins of the adenovirus and its host cell at two consensus sites: -Yaa-Xaa-Gly-Gly-|-Xaa- and -Yaa-Xaa-Gly-Xaa-|-Gly- (in which Yaa is Met, Ile or Leu, and Xaa is any amino acid).. With respect to regulation, requires DNA and protease cofactor for maximal activation. Inside nascent virions, becomes partially activated by binding to the viral DNA, allowing it to cleave the cofactor that binds to the protease and fully activates it. Actin, like the viral protease cofactor, seems to act as a cofactor in the cleavage of cytokeratin 18 and of actin itself. Its function is as follows. Cleaves viral precursor proteins (pTP, pIIIa, pVI, pVII, pVIII, and pX) inside newly assembled particles giving rise to mature virions. Protease complexed to its cofactor slides along the viral DNA to specifically locate and cleave the viral precursors. Mature virions have a weakened organization compared to the unmature virions, thereby facilitating subsequent uncoating. Without maturation, the particle lacks infectivity and is unable to uncoat. Late in adenovirus infection, in the cytoplasm, may participate in the cytoskeleton destruction. Cleaves host cell cytoskeletal keratins K7 and K18. The chain is Protease from Human adenovirus D serotype 17 (HAdV-17).